A 331-amino-acid chain; its full sequence is Protein RecA (331 aa).

66-73 (GPESSGKT) is a binding site for ATP.

The protein belongs to the RecA family.

The protein localises to the cytoplasm. Can catalyze the hydrolysis of ATP in the presence of single-stranded DNA, the ATP-dependent uptake of single-stranded DNA by duplex DNA, and the ATP-dependent hybridization of homologous single-stranded DNAs. It interacts with LexA causing its activation and leading to its autocatalytic cleavage. This Acholeplasma laidlawii protein is Protein RecA.